An 892-amino-acid chain; its full sequence is Zinc finger protein 473 homolog (892 aa).

Residues 23–101 form the KRAB domain; that stretch reads ETLKDLAMDF…TKSSPLQSGF (79 aa). Composition is skewed to polar residues over residues 66–76 and 84–97; these read DTSQPSLTSQP and ATSTEVPETKSSPL. Disordered regions lie at residues 66–97 and 134–203; these read DTSQPSLTSQPDVREELEATSTEVPETKSSPL and GDPE…DSVQ. Basic and acidic residues-rich tracts occupy residues 138–156 and 190–203; these read SLPRPDISDKESPADHQSP and KESRSDLSQEDSVQ. C2H2-type zinc fingers lie at residues 209–231 and 265–287; these read YKCSECGESFSQSHHLIQHWVLH and YTCQECGKRFSQNVYLQWHQKIH. The segment covering 297-308 has biased composition (polar residues); that stretch reads SDSNLEGLSRSP. The disordered stretch occupies residues 297 to 370; sequence SDSNLEGLSR…HPKPLRHQKT (74 aa). Composition is skewed to basic and acidic residues over residues 313 to 323 and 332 to 353; these read GKQRLSKDTDS and QDQEKPPTGESRDQENLHESQP. C2H2-type zinc fingers lie at residues 377-399, 404-426, 432-454, 460-482, 488-510, 516-538, 544-566, and 572-594; these read FRCKKCGETFSGAFHLAKHQRAH, YKCASCPAVFNLSKHCFQHRKSH, CECQGCRKSFNWRSSLIKHQAIH, YKCDECGKAFNHSSTLKIHQRIH, HKCSECGKAFCRRTDLTEHQRVH, HQCPVCARTFNRPSHLVRHRLRH, FGCAKCKETFIYKEQLERHNKIH, and YECKQCGEHFICRSTLNCHLSIH. Lys-476 is covalently cross-linked (Glycyl lysine isopeptide (Lys-Gly) (interchain with G-Cter in SUMO2)). Lys-602 participates in a covalent cross-link: Glycyl lysine isopeptide (Lys-Gly) (interchain with G-Cter in SUMO2). A C2H2-type 11; degenerate zinc finger spans residues 697-719; it reads FKCDIYNRAFKQRAHLSKHQLIH. 6 C2H2-type zinc fingers span residues 725–747, 753–775, 781–803, 809–831, 837–859, and 865–887; these read FKCNECDRAFKQSNYLIQHQKTH, FECSECGKTFHQRSCLSKHQKIH, FKCGDCGKAFISGAQLIRHQRIH, YVCQECGKTFSQSSCLTLHLRIH, YTCGTCGKAFAQRANQRKHERIH, and YACGLCGKAFGLRTHLQQHQRIH.

The protein belongs to the krueppel C2H2-type zinc-finger protein family. As to quaternary structure, interacts with the SLBP/pre-mRNA complex but not with SLBP alone. Interacts with LSM11 in a U7 snRNP-dependent manner.

Its subcellular location is the nucleus. In terms of biological role, involved in histone 3'-end pre-mRNA processing by associating with U7 snRNP and interacting with SLBP/pre-mRNA complex. Increases histone 3'-end pre-mRNA processing but has no effect on U7 snRNP levels, when overexpressed. Required for cell cycle progression from G1 to S phases. The sequence is that of Zinc finger protein 473 homolog (Znf473) from Mus musculus (Mouse).